Consider the following 357-residue polypeptide: Probable nitronate monooxygenase (357 aa).

FMN-binding positions include asparagine 71, glutamine 175, glycine 180, glycine 219, and 238–241 (QMGT).

It belongs to the nitronate monooxygenase family. NMO class I subfamily. It depends on FMN as a cofactor.

The enzyme catalyses 3 propionate 3-nitronate + 3 O2 + H2O = 3 3-oxopropanoate + 2 nitrate + nitrite + H2O2 + 3 H(+). Its function is as follows. Nitronate monooxygenase that uses molecular oxygen to catalyze the oxidative denitrification of alkyl nitronates. Acts on propionate 3-nitronate (P3N), the presumed physiological substrate. Probably functions in the detoxification of P3N, a metabolic poison produced by plants and fungi as a defense mechanism. In Staphylococcus haemolyticus (strain JCSC1435), this protein is Probable nitronate monooxygenase.